The sequence spans 496 residues: Probable malate:quinone oxidoreductase (496 aa).

This sequence belongs to the MQO family. It depends on FAD as a cofactor.

The enzyme catalyses (S)-malate + a quinone = a quinol + oxaloacetate. Its pathway is carbohydrate metabolism; tricarboxylic acid cycle; oxaloacetate from (S)-malate (quinone route): step 1/1. The protein is Probable malate:quinone oxidoreductase of Flavobacterium psychrophilum (strain ATCC 49511 / DSM 21280 / CIP 103535 / JIP02/86).